A 365-amino-acid polypeptide reads, in one-letter code: Protein SGT1 homolog (365 aa).

Ala-2 is subject to N-acetylalanine. TPR repeat units follow at residues 11 to 44 (SQRFFQSFSDALIDEDPQAALEELTKALEQKPDD), 45 to 78 (AQYYCQRAYCHILLGNYCVAVADAKKSLELNPNN), and 79 to 112 (STAMLRKGICEYHEKNYAAALETFTEGQKLDIET). Residues 169 to 258 (QSKIKYDWYQ…PEAVRWEKLE (90 aa)) form the CS domain. Thr-265 is subject to Phosphothreonine. One can recognise an SGS domain in the interval 276-365 (LYPSSSPYTR…PPDDMEWKKY (90 aa)). Phosphoserine is present on Ser-281. Thr-284 carries the phosphothreonine modification. Lys-295 participates in a covalent cross-link: Glycyl lysine isopeptide (Lys-Gly) (interchain with G-Cter in SUMO1); alternate. A Glycyl lysine isopeptide (Lys-Gly) (interchain with G-Cter in SUMO2); alternate cross-link involves residue Lys-295. Ser-331 carries the phosphoserine modification.

It belongs to the SGT1 family. As to quaternary structure, probably associates with SCF (SKP1-CUL1-F-box protein) complex through interaction with SKP1. Interacts with S100A6. Interacts with HSP90. Phosphorylated at Ser-281 and Ser-331, dephosphorylation promotes nuclear translocation, most likely due to disruption of the SUGT1-HSP90 complex.

It is found in the cytoplasm. It localises to the nucleus. Its function is as follows. May play a role in ubiquitination and subsequent proteasomal degradation of target proteins. This is Protein SGT1 homolog from Homo sapiens (Human).